The chain runs to 423 residues: UDP-N-acetylglucosamine 1-carboxyvinyltransferase 2 (423 aa).

23 to 24 is a phosphoenolpyruvate binding site; the sequence is KN. Arginine 96 contributes to the UDP-N-acetyl-alpha-D-glucosamine binding site. Cysteine 120 serves as the catalytic Proton donor. Residue cysteine 120 is modified to 2-(S-cysteinyl)pyruvic acid O-phosphothioketal. UDP-N-acetyl-alpha-D-glucosamine contacts are provided by residues 125-129, aspartate 309, and valine 331; that span reads RPIDL.

This sequence belongs to the EPSP synthase family. MurA subfamily.

It localises to the cytoplasm. The enzyme catalyses phosphoenolpyruvate + UDP-N-acetyl-alpha-D-glucosamine = UDP-N-acetyl-3-O-(1-carboxyvinyl)-alpha-D-glucosamine + phosphate. Its pathway is cell wall biogenesis; peptidoglycan biosynthesis. Functionally, cell wall formation. Adds enolpyruvyl to UDP-N-acetylglucosamine. The chain is UDP-N-acetylglucosamine 1-carboxyvinyltransferase 2 from Streptococcus agalactiae serotype Ia (strain ATCC 27591 / A909 / CDC SS700).